A 211-amino-acid polypeptide reads, in one-letter code: Histidine biosynthesis bifunctional protein HisIE (211 aa).

Positions 1-107 (MNKLIDFSKG…FNSEIESRFK (107 aa)) are phosphoribosyl-AMP cyclohydrolase. Positions 108–211 (IQALAQTIHQ…KGERKKVQEW (104 aa)) are phosphoribosyl-ATP pyrophosphohydrolase.

In the N-terminal section; belongs to the PRA-CH family. This sequence in the C-terminal section; belongs to the PRA-PH family.

It localises to the cytoplasm. The enzyme catalyses 1-(5-phospho-beta-D-ribosyl)-ATP + H2O = 1-(5-phospho-beta-D-ribosyl)-5'-AMP + diphosphate + H(+). It catalyses the reaction 1-(5-phospho-beta-D-ribosyl)-5'-AMP + H2O = 1-(5-phospho-beta-D-ribosyl)-5-[(5-phospho-beta-D-ribosylamino)methylideneamino]imidazole-4-carboxamide. The protein operates within amino-acid biosynthesis; L-histidine biosynthesis; L-histidine from 5-phospho-alpha-D-ribose 1-diphosphate: step 2/9. Its pathway is amino-acid biosynthesis; L-histidine biosynthesis; L-histidine from 5-phospho-alpha-D-ribose 1-diphosphate: step 3/9. The sequence is that of Histidine biosynthesis bifunctional protein HisIE from Staphylococcus epidermidis (strain ATCC 12228 / FDA PCI 1200).